A 59-amino-acid polypeptide reads, in one-letter code: Ferredoxin (59 aa).

4Fe-4S ferredoxin-type domains follow at residues 2–30 (GKIT…LEVN) and 31–59 (DHVE…LKVE). The [4Fe-4S] cluster site is built by C12, C15, C18, C22, C41, C44, C47, and C51.

Requires [4Fe-4S] cluster as cofactor.

Ferredoxins are iron-sulfur proteins that transfer electrons in a wide variety of metabolic reactions. In Entamoeba histolytica (strain ATCC 30459 / HM-1:IMSS / ABRM), this protein is Ferredoxin.